A 313-amino-acid polypeptide reads, in one-letter code: Homoserine O-succinyltransferase (313 aa).

Cysteine 142 acts as the Acyl-thioester intermediate in catalysis. Positions 163 and 192 each coordinate substrate. The Proton acceptor role is filled by histidine 235. Residue glutamate 237 is part of the active site. Arginine 249 contacts substrate.

Belongs to the MetA family.

The protein localises to the cytoplasm. It catalyses the reaction L-homoserine + succinyl-CoA = O-succinyl-L-homoserine + CoA. It functions in the pathway amino-acid biosynthesis; L-methionine biosynthesis via de novo pathway; O-succinyl-L-homoserine from L-homoserine: step 1/1. Its function is as follows. Transfers a succinyl group from succinyl-CoA to L-homoserine, forming succinyl-L-homoserine. The chain is Homoserine O-succinyltransferase from Vibrio vulnificus (strain CMCP6).